The primary structure comprises 469 residues: Extracellular endo-alpha-(1-&gt;5)-L-arabinanase 2 (469 aa).

Residues 1 to 26 form the signal peptide; the sequence is MFNRLFRVCFLAALIMAFTLPNSVYA. The active-site Proton acceptor is Asp-38. Substrate-binding positions include Asp-38, Asp-122, 168 to 171, 188 to 190, and 220 to 224; these read NVVD, SYS, and HSRIE. The active-site Proton donor is Glu-224. Residue His-318 participates in Ca(2+) binding.

The protein belongs to the glycosyl hydrolase 43 family. As to quaternary structure, homodimer. The cofactor is Ca(2+).

The protein localises to the secreted. The catalysed reaction is Endohydrolysis of (1-&gt;5)-alpha-arabinofuranosidic linkages in (1-&gt;5)-arabinans.. The protein operates within glycan metabolism; L-arabinan degradation. In terms of biological role, involved in the degradation of arabinan and is a key enzyme in the complete degradation of the plant cell wall. Catalyzes the internal cleavage of alpha-(1-&gt;5)-L-arabinofuranosyl residues of the alpha-1,5-L-arabinan to produce arabino-oligosaccharides and L-arabinose. It is also active toward linear branched sugar beet arabinan, and pectin from apple. The sequence is that of Extracellular endo-alpha-(1-&gt;5)-L-arabinanase 2 (abn2) from Bacillus subtilis (strain 168).